Consider the following 242-residue polypeptide: Probable septum site-determining protein MinC (242 aa).

Belongs to the MinC family. As to quaternary structure, interacts with MinD and FtsZ.

Cell division inhibitor that blocks the formation of polar Z ring septums. Rapidly oscillates between the poles of the cell to destabilize FtsZ filaments that have formed before they mature into polar Z rings. Prevents FtsZ polymerization. The chain is Probable septum site-determining protein MinC from Thioalkalivibrio sulfidiphilus (strain HL-EbGR7).